The sequence spans 179 residues: Ribosome maturation factor RimM (179 aa).

Positions 98 to 170 constitute a PRC barrel domain; it reads PDEFWDRRLR…RIVVSGIPGL (73 aa).

The protein belongs to the RimM family. In terms of assembly, binds ribosomal protein uS19.

Its subcellular location is the cytoplasm. In terms of biological role, an accessory protein needed during the final step in the assembly of 30S ribosomal subunit, possibly for assembly of the head region. Essential for efficient processing of 16S rRNA. May be needed both before and after RbfA during the maturation of 16S rRNA. It has affinity for free ribosomal 30S subunits but not for 70S ribosomes. The sequence is that of Ribosome maturation factor RimM from Cutibacterium acnes (strain DSM 16379 / KPA171202) (Propionibacterium acnes).